The chain runs to 217 residues: Probable transaldolase (217 aa).

Catalysis depends on lysine 85, which acts as the Schiff-base intermediate with substrate.

The protein belongs to the transaldolase family. Type 3B subfamily.

The protein resides in the cytoplasm. It carries out the reaction D-sedoheptulose 7-phosphate + D-glyceraldehyde 3-phosphate = D-erythrose 4-phosphate + beta-D-fructose 6-phosphate. The protein operates within carbohydrate degradation; pentose phosphate pathway; D-glyceraldehyde 3-phosphate and beta-D-fructose 6-phosphate from D-ribose 5-phosphate and D-xylulose 5-phosphate (non-oxidative stage): step 2/3. In terms of biological role, transaldolase is important for the balance of metabolites in the pentose-phosphate pathway. The polypeptide is Probable transaldolase (Lachnoclostridium phytofermentans (strain ATCC 700394 / DSM 18823 / ISDg) (Clostridium phytofermentans)).